A 511-amino-acid polypeptide reads, in one-letter code: Putative thymidine phosphorylase (511 aa).

This sequence belongs to the thymidine/pyrimidine-nucleoside phosphorylase family. Type 2 subfamily.

The catalysed reaction is thymidine + phosphate = 2-deoxy-alpha-D-ribose 1-phosphate + thymine. This is Putative thymidine phosphorylase from Polaromonas sp. (strain JS666 / ATCC BAA-500).